A 145-amino-acid chain; its full sequence is Ventricular natriuretic peptide (145 aa).

An N-terminal signal peptide occupies residues 1–24 (MRMGKIAVGYGFLLLLVFQLGVRA). An intrachain disulfide couples Cys117 to Cys133.

It belongs to the natriuretic peptide family. Heart atrium and ventricle, and to a very low extent in brain.

The protein resides in the secreted. Exhibits natriuretic and vasodepressor activity. The protein is Ventricular natriuretic peptide (vnp) of Acipenser transmontanus (White sturgeon).